A 344-amino-acid chain; its full sequence is Secreted LysM effector LysM2 (344 aa).

Residues 1–24 (MMAPKSLQTGLLILLLAKLKLAWG) form the signal peptide. A LysM 1 domain is found at 36 to 80 (YEAAASSGDTCTSFAAEWGLTEETFASLNPSAACPSLVAGQNYCM). The span at 88–134 (STTSSSSSTTSSSTTSSSTTSSSTTSSSTTTSSFTTTTASETTSTAA) shows a compositional bias: low complexity. A disordered region spans residues 88-141 (STTSSSSSTTSSSTTSSSTTSSSTTSSSTTTSSFTTTTASETTSTAANGVTTPM). LysM domains follow at residues 153 to 199 (KFDL…YVCV), 216 to 262 (KFDL…YVCV), and 296 to 342 (KFWL…YICV).

Belongs to the secreted LysM effector family.

In terms of biological role, might have a role in sequestration of chitin oligosaccharides (breakdown products of fungal cell walls that are released during invasion and act as triggers of host immunity) to dampen host defense. In Penicillium expansum (Blue mold rot fungus), this protein is Secreted LysM effector LysM2.